A 120-amino-acid chain; its full sequence is Large ribosomal subunit protein uL18 (120 aa).

It belongs to the universal ribosomal protein uL18 family. Part of the 50S ribosomal subunit; part of the 5S rRNA/L5/L18/L25 subcomplex. Contacts the 5S and 23S rRNAs.

Its function is as follows. This is one of the proteins that bind and probably mediate the attachment of the 5S RNA into the large ribosomal subunit, where it forms part of the central protuberance. The sequence is that of Large ribosomal subunit protein uL18 from Agrobacterium fabrum (strain C58 / ATCC 33970) (Agrobacterium tumefaciens (strain C58)).